Consider the following 316-residue polypeptide: PDZ and LIM domain protein 3 (316 aa).

The 84-residue stretch at 1 to 84 folds into the PDZ domain; sequence MPQNVVLPGP…QLCLKIDRAE (84 aa). Phosphoserine occurs at positions 18 and 93. Position 164 is an omega-N-methylarginine (Arg-164). Positions 244–303 constitute an LIM zinc-binding domain; the sequence is PLCDKCGSGIVGAVVKARDKYRHPECFVCADCNLNLKQKGYFFVEGELYCETHARARTRP.

Interacts with ACTN2. Forms a heterodimer with PDLIM4 (via LIM domain).

It localises to the cytoplasm. Its subcellular location is the myofibril. The protein localises to the sarcomere. It is found in the z line. Functionally, may play a role in the organization of actin filament arrays within muscle cells. The protein is PDZ and LIM domain protein 3 (Pdlim3) of Mus musculus (Mouse).